The following is a 137-amino-acid chain: Small ribosomal subunit protein bS6 (137 aa).

Belongs to the bacterial ribosomal protein bS6 family.

Binds together with bS18 to 16S ribosomal RNA. The chain is Small ribosomal subunit protein bS6 from Sulfurimonas denitrificans (strain ATCC 33889 / DSM 1251) (Thiomicrospira denitrificans (strain ATCC 33889 / DSM 1251)).